A 249-amino-acid chain; its full sequence is Exosome complex component Rrp41 (249 aa).

It belongs to the RNase PH family. Rrp41 subfamily. As to quaternary structure, component of the archaeal exosome complex. Forms a hexameric ring-like arrangement composed of 3 Rrp41-Rrp42 heterodimers. The hexameric ring associates with a trimer of Rrp4 and/or Csl4 subunits.

The protein resides in the cytoplasm. Catalytic component of the exosome, which is a complex involved in RNA degradation. Has 3'-&gt;5' exoribonuclease activity. Can also synthesize heteromeric RNA-tails. This is Exosome complex component Rrp41 from Pyrococcus abyssi (strain GE5 / Orsay).